Here is a 159-residue protein sequence, read N- to C-terminus: Peptide deformylase (159 aa).

Residues Cys-88 and His-130 each coordinate Fe cation. Glu-131 is a catalytic residue. Position 134 (His-134) interacts with Fe cation.

Belongs to the polypeptide deformylase family. Fe(2+) is required as a cofactor.

It catalyses the reaction N-terminal N-formyl-L-methionyl-[peptide] + H2O = N-terminal L-methionyl-[peptide] + formate. Its function is as follows. Removes the formyl group from the N-terminal Met of newly synthesized proteins. Requires at least a dipeptide for an efficient rate of reaction. N-terminal L-methionine is a prerequisite for activity but the enzyme has broad specificity at other positions. The chain is Peptide deformylase from Thermoanaerobacter pseudethanolicus (strain ATCC 33223 / 39E) (Clostridium thermohydrosulfuricum).